The chain runs to 317 residues: Melanocyte-stimulating hormone receptor (317 aa).

The Extracellular segment spans residues 1–37 (MPVQGSQRRLLGSLNSTPTATPHLGLAANQTGAWCLE). Residue N29 is glycosylated (N-linked (GlcNAc...) asparagine). Residues 38 to 63 (VSIPDGLFLSLGLVSLVENVLVVTAI) traverse the membrane as a helical segment. Topologically, residues 64–72 (AKNRNLHSP) are cytoplasmic. A helical membrane pass occupies residues 73–93 (MYCFICCLALSDLLVSGSNML). The Extracellular portion of the chain corresponds to 94–118 (ETAVTLLLEAGALAARAAVVQQLDN). Residues 119–140 (VIDVITCSSMLSSLCFLGAIAV) traverse the membrane as a helical segment. At 141-163 (DRYISIFYALRYHSIVTLPRARR) the chain is on the cytoplasmic side. The helical transmembrane segment at 164–183 (AVAAIWVASVLFSMLFIAYY) threads the bilayer. Topologically, residues 184–191 (DHAAVLLC) are extracellular. The chain crosses the membrane as a helical span at residues 192 to 211 (LVVFFLAMLVLMAVLYVHML). The Cytoplasmic portion of the chain corresponds to 212 to 240 (ARACQHAQGIARLHKRQRPAHQGFGLKGA). A helical membrane pass occupies residues 241–266 (ATLTILLGIFFLCWGPFFLHLTLIVL). Residues 267–279 (CPQHPTCSCIFKN) are Extracellular-facing. The helical transmembrane segment at 280–300 (FNLFLALIICNAIIDPLIYAF) threads the bilayer. Over 301-317 (RSQELRRTLKEVLLCSW) the chain is Cytoplasmic. Residue C315 is the site of S-palmitoyl cysteine attachment.

It belongs to the G-protein coupled receptor 1 family. Interacts with MGRN1, but does not undergo MGRN1-mediated ubiquitination; this interaction competes with GNAS-binding and thus inhibits agonist-induced cAMP production. Interacts with OPN3; the interaction results in a decrease in MC1R-mediated cAMP signaling and ultimately a decrease in melanin production in melanocytes.

The protein localises to the cell membrane. Its function is as follows. Receptor for MSH (alpha, beta and gamma) and ACTH. The activity of this receptor is mediated by G proteins which activate adenylate cyclase. Mediates melanogenesis, the production of eumelanin (black/brown) and phaeomelanin (red/yellow), via regulation of cAMP signaling in melanocytes. The polypeptide is Melanocyte-stimulating hormone receptor (MC1R) (Allenopithecus nigroviridis (Allen's swamp monkey)).